The chain runs to 343 residues: MSLAGKKITVHDMSLRDGMHPKRHQITLDQMRDIARGLDAAGVPLIEVTHGDGLGGASVNYGFPAHTDEAYLSAVIPELKQARVSALLLPGIGTVEHLRMAHALGVGTIRVATHCTEADVSEQHIGLARTLGLDTVGFLMMAHMSSPAQLVVQAKLMESYGANCIYITDSAGHMLPDDVTARIGQVRDALKPETELGFHGHHNLAMGVANSVAAVAAGANRIDAAAAGLGAGAGNTPMEVFVAVCDRMGIETGVDVFAISDVAEDLVVPIMDAPIRLDRDALTLGYAGVYSSFLLFAKRAEAKYGIPARDILVELGRQRLVGGQEDMIEDAALTMVRAREVAA.

Positions 8 to 260 constitute a Pyruvate carboxyltransferase domain; it reads ITVHDMSLRD…ETGVDVFAIS (253 aa). 16–17 is a substrate binding site; it reads RD. Residue Asp17 coordinates Mn(2+). His20 acts as the Proton acceptor in catalysis. Ser170 and His199 together coordinate substrate. His199 and His201 together coordinate Mn(2+). Residue Tyr290 coordinates substrate.

It belongs to the 4-hydroxy-2-oxovalerate aldolase family.

The enzyme catalyses (S)-4-hydroxy-2-oxopentanoate = acetaldehyde + pyruvate. The protein is 4-hydroxy-2-oxovalerate aldolase 1 (bphI) of Burkholderia cenocepacia (strain ATCC BAA-245 / DSM 16553 / LMG 16656 / NCTC 13227 / J2315 / CF5610) (Burkholderia cepacia (strain J2315)).